Consider the following 363-residue polypeptide: Chorismate synthase (363 aa).

NADP(+)-binding residues include Arg47 and Arg53. FMN-binding positions include 124 to 126, Gly286, 301 to 305, and Arg327; these read RSS and KPTAT.

It belongs to the chorismate synthase family. Homotetramer. The cofactor is FMNH2.

It carries out the reaction 5-O-(1-carboxyvinyl)-3-phosphoshikimate = chorismate + phosphate. Its pathway is metabolic intermediate biosynthesis; chorismate biosynthesis; chorismate from D-erythrose 4-phosphate and phosphoenolpyruvate: step 7/7. In terms of biological role, catalyzes the anti-1,4-elimination of the C-3 phosphate and the C-6 proR hydrogen from 5-enolpyruvylshikimate-3-phosphate (EPSP) to yield chorismate, which is the branch point compound that serves as the starting substrate for the three terminal pathways of aromatic amino acid biosynthesis. This reaction introduces a second double bond into the aromatic ring system. This chain is Chorismate synthase, found in Thermosynechococcus vestitus (strain NIES-2133 / IAM M-273 / BP-1).